A 105-amino-acid polypeptide reads, in one-letter code: Large ribosomal subunit protein uL24 (105 aa).

Belongs to the universal ribosomal protein uL24 family. As to quaternary structure, part of the 50S ribosomal subunit.

One of two assembly initiator proteins, it binds directly to the 5'-end of the 23S rRNA, where it nucleates assembly of the 50S subunit. In terms of biological role, one of the proteins that surrounds the polypeptide exit tunnel on the outside of the subunit. The polypeptide is Large ribosomal subunit protein uL24 (Chromohalobacter salexigens (strain ATCC BAA-138 / DSM 3043 / CIP 106854 / NCIMB 13768 / 1H11)).